Here is a 429-residue protein sequence, read N- to C-terminus: Gamma-glutamyl phosphate reductase (429 aa).

Belongs to the gamma-glutamyl phosphate reductase family.

It is found in the cytoplasm. It catalyses the reaction L-glutamate 5-semialdehyde + phosphate + NADP(+) = L-glutamyl 5-phosphate + NADPH + H(+). It participates in amino-acid biosynthesis; L-proline biosynthesis; L-glutamate 5-semialdehyde from L-glutamate: step 2/2. Its function is as follows. Catalyzes the NADPH-dependent reduction of L-glutamate 5-phosphate into L-glutamate 5-semialdehyde and phosphate. The product spontaneously undergoes cyclization to form 1-pyrroline-5-carboxylate. This is Gamma-glutamyl phosphate reductase from Sphingopyxis alaskensis (strain DSM 13593 / LMG 18877 / RB2256) (Sphingomonas alaskensis).